Consider the following 129-residue polypeptide: Ribosome-binding factor A (129 aa).

This sequence belongs to the RbfA family. Monomer. Binds 30S ribosomal subunits, but not 50S ribosomal subunits or 70S ribosomes.

The protein resides in the cytoplasm. One of several proteins that assist in the late maturation steps of the functional core of the 30S ribosomal subunit. Associates with free 30S ribosomal subunits (but not with 30S subunits that are part of 70S ribosomes or polysomes). Required for efficient processing of 16S rRNA. May interact with the 5'-terminal helix region of 16S rRNA. The sequence is that of Ribosome-binding factor A from Desulfosudis oleivorans (strain DSM 6200 / JCM 39069 / Hxd3) (Desulfococcus oleovorans).